Consider the following 316-residue polypeptide: Universal stress protein E (316 aa).

This sequence belongs to the universal stress protein A family.

It localises to the cytoplasm. Required for resistance to DNA-damaging agents. This is Universal stress protein E (uspE) from Escherichia coli O157:H7.